Reading from the N-terminus, the 294-residue chain is Cell division protein FtsQ (294 aa).

Over 1–26 (MARGPNRRRVDRVPGERRRRLARAMA) the chain is Cytoplasmic. The helical transmembrane segment at 27-49 (LALPSILALAALGGAATLGWRVG) threads the bilayer. Residues 50-294 (WKSDLLRVRE…GPQGRSSSLR (245 aa)) are Periplasmic-facing. The POTRA domain occupies 55-123 (LRVREIRFEG…PALEVQLAER (69 aa)). The disordered stretch occupies residues 266-294 (AGRRGEPDGRSSYAAGGGGGPQGRSSSLR).

This sequence belongs to the FtsQ/DivIB family. FtsQ subfamily.

The protein resides in the cell inner membrane. Its function is as follows. Essential cell division protein. This is Cell division protein FtsQ from Anaeromyxobacter sp. (strain K).